The primary structure comprises 228 residues: Urease accessory protein UreF (228 aa).

It belongs to the UreF family. As to quaternary structure, ureD, UreF and UreG form a complex that acts as a GTP-hydrolysis-dependent molecular chaperone, activating the urease apoprotein by helping to assemble the nickel containing metallocenter of UreC. The UreE protein probably delivers the nickel.

It localises to the cytoplasm. Its function is as follows. Required for maturation of urease via the functional incorporation of the urease nickel metallocenter. The chain is Urease accessory protein UreF from Prochlorococcus marinus subsp. pastoris (strain CCMP1986 / NIES-2087 / MED4).